The chain runs to 364 residues: tRNA 2-selenouridine synthase (364 aa).

The Rhodanese domain maps to 14 to 137 (LIADTPIIDV…LRQTAIQATI (124 aa)). Cysteine 97 (S-selanylcysteine intermediate) is an active-site residue.

This sequence belongs to the SelU family. As to quaternary structure, monomer.

It catalyses the reaction 5-methylaminomethyl-2-thiouridine(34) in tRNA + selenophosphate + (2E)-geranyl diphosphate + H2O + H(+) = 5-methylaminomethyl-2-selenouridine(34) in tRNA + (2E)-thiogeraniol + phosphate + diphosphate. It carries out the reaction 5-methylaminomethyl-2-thiouridine(34) in tRNA + (2E)-geranyl diphosphate = 5-methylaminomethyl-S-(2E)-geranyl-thiouridine(34) in tRNA + diphosphate. The catalysed reaction is 5-methylaminomethyl-S-(2E)-geranyl-thiouridine(34) in tRNA + selenophosphate + H(+) = 5-methylaminomethyl-2-(Se-phospho)selenouridine(34) in tRNA + (2E)-thiogeraniol. The enzyme catalyses 5-methylaminomethyl-2-(Se-phospho)selenouridine(34) in tRNA + H2O = 5-methylaminomethyl-2-selenouridine(34) in tRNA + phosphate. Functionally, involved in the post-transcriptional modification of the uridine at the wobble position (U34) of tRNA(Lys), tRNA(Glu) and tRNA(Gln). Catalyzes the conversion of 2-thiouridine (S2U-RNA) to 2-selenouridine (Se2U-RNA). Acts in a two-step process involving geranylation of 2-thiouridine (S2U) to S-geranyl-2-thiouridine (geS2U) and subsequent selenation of the latter derivative to 2-selenouridine (Se2U) in the tRNA chain. The protein is tRNA 2-selenouridine synthase of Escherichia coli (strain ATCC 8739 / DSM 1576 / NBRC 3972 / NCIMB 8545 / WDCM 00012 / Crooks).